A 471-amino-acid chain; its full sequence is ATP synthase subunit beta (471 aa).

Residue 153-160 (GGAGVGKT) coordinates ATP.

It belongs to the ATPase alpha/beta chains family. F-type ATPases have 2 components, CF(1) - the catalytic core - and CF(0) - the membrane proton channel. CF(1) has five subunits: alpha(3), beta(3), gamma(1), delta(1), epsilon(1). CF(0) has four main subunits: a(1), b(1), b'(1) and c(9-12).

The protein localises to the cell membrane. The catalysed reaction is ATP + H2O + 4 H(+)(in) = ADP + phosphate + 5 H(+)(out). Its function is as follows. Produces ATP from ADP in the presence of a proton gradient across the membrane. The catalytic sites are hosted primarily by the beta subunits. The protein is ATP synthase subunit beta of Roseiflexus castenholzii (strain DSM 13941 / HLO8).